We begin with the raw amino-acid sequence, 1268 residues long: Meiosis inhibitor protein 1 (1268 aa).

As to expression, strongly expressed in testis, weakly in brain, and not detected in spleen, liver, kidney, small intestine or colon.

In terms of biological role, required for normal meiotic chromosome synapsis. May be involved in the formation of meiotic double-strand breaks (DSBs) in spermatocytes. This chain is Meiosis inhibitor protein 1, found in Mus musculus (Mouse).